The primary structure comprises 64 residues: Large ribosomal subunit protein bL35 (64 aa).

Residues 1-14 show a composition bias toward basic residues; the sequence is MKQKTHKGTAKRIK. A disordered region spans residues 1-48; it reads MKQKTHKGTAKRIKVTGSGKLRREQANRRHLLEGKPSKRTRRLKGTED. Basic and acidic residues predominate over residues 21–36; that stretch reads LRREQANRRHLLEGKP.

Belongs to the bacterial ribosomal protein bL35 family.

This Corynebacterium aurimucosum (strain ATCC 700975 / DSM 44827 / CIP 107346 / CN-1) (Corynebacterium nigricans) protein is Large ribosomal subunit protein bL35.